The sequence spans 228 residues: Ribonuclease 3 (228 aa).

The RNase III domain maps to 7 to 132 (LSAFMDRLGH…VIAAVYLDAG (126 aa)). Glu45 provides a ligand contact to Mg(2+). Residue Asp49 is part of the active site. Asp118 and Glu121 together coordinate Mg(2+). The active site involves Glu121. In terms of domain architecture, DRBM spans 157 to 226 (DPKTALQEWA…AKALLERLER (70 aa)).

It belongs to the ribonuclease III family. In terms of assembly, homodimer. The cofactor is Mg(2+).

It is found in the cytoplasm. It catalyses the reaction Endonucleolytic cleavage to 5'-phosphomonoester.. Its function is as follows. Digests double-stranded RNA. Involved in the processing of ribosomal RNA precursors and of some mRNAs. Complements an E.coli disruption mutant, but the E.coli enzyme does not cleave R.capsulatus rRNA precursor, showing substrate recognition is different. Probably also processes some mRNAs, and tRNAs when they are encoded in the rRNA operon. Probably processes pre-crRNA and tracrRNA of type II CRISPR loci if present in the organism. In Rhodobacter capsulatus (Rhodopseudomonas capsulata), this protein is Ribonuclease 3 (rnc).